A 190-amino-acid chain; its full sequence is GTP cyclohydrolase 1 (190 aa).

Residues Cys-75, His-78, and Cys-146 each coordinate Zn(2+).

It belongs to the GTP cyclohydrolase I family. In terms of assembly, toroid-shaped homodecamer, composed of two pentamers of five dimers.

It carries out the reaction GTP + H2O = 7,8-dihydroneopterin 3'-triphosphate + formate + H(+). The protein operates within cofactor biosynthesis; 7,8-dihydroneopterin triphosphate biosynthesis; 7,8-dihydroneopterin triphosphate from GTP: step 1/1. This is GTP cyclohydrolase 1 from Campylobacter jejuni subsp. jejuni serotype O:23/36 (strain 81-176).